A 333-amino-acid chain; its full sequence is Prenyltransferase stbC (333 aa).

8 consecutive transmembrane segments (helical) span residues 74-94 (VAFQ…AGCA), 125-145 (ANIF…PLPA), 147-164 (CQRL…YPFC), 173-193 (VILG…AGLP), 201-221 (VPTI…DVVY), 247-267 (ILLT…GVLV), 272-292 (YFFV…IGGI), and 304-324 (SGWF…IEYL).

Belongs to the UbiA prenyltransferase family.

The protein localises to the membrane. The catalysed reaction is orsellinate + (2E,6E)-farnesyl diphosphate = ilicicolinate B + diphosphate. It participates in secondary metabolite biosynthesis; terpenoid biosynthesis. In terms of biological role, prenyltransferase; part of the cluster that mediates the biosynthesis of LL-Z1272-beta, also known as ilicicolin B, a prenylated aryl-aldehyde produced by several fungi and that serves as a key pathway intermediate for many fungal meroterpenoids. The first step in the pathway is performed by the non-reducing polyketide synthase stbA that produces orsellinic acid by condensing acetyl-CoA with 3 malonyl-CoA units. The prenyltransferase stbC then prenylates orsenilic acid into grifolic acid. Finally, grifolic acid is reduced to ilicicolin B by the NRPS-like protein stbB. The polypeptide is Prenyltransferase stbC (Stachybotrys bisbyi (Hyalostachybotrys bisbyi)).